A 375-amino-acid chain; its full sequence is FK506-binding protein 4 (375 aa).

2 disordered regions span residues 55–78 and 127–265; these read GFED…EEEI and PPDF…SKMT. 2 stretches are compositionally biased toward acidic residues: residues 56 to 66 and 131 to 173; these read FEDDYDEEEQE and FDQD…DPDR. Residues 196–216 are compositionally biased toward basic and acidic residues; sequence DSKKRAAEKPVKETAAKKLKA. Residues 217–230 show a composition bias toward low complexity; sequence DASAASAASTPTKA. A compositionally biased stretch (basic and acidic residues) spans 231–261; the sequence is IETKGEKQTKGAKDTKPKSETVEKKTVDKST. One can recognise a PPIase FKBP-type domain in the interval 289-375; that stretch reads GQKVGMRYVG…VFDVKLVEIK (87 aa).

It belongs to the FKBP-type PPIase family. FKBP3/4 subfamily. Binds to histones H3 and H4.

Its subcellular location is the nucleus. The enzyme catalyses [protein]-peptidylproline (omega=180) = [protein]-peptidylproline (omega=0). With respect to regulation, inhibited by both FK506 and rapamycin. Functionally, PPIase that acts as a histone chaperone. Histone proline isomerase that increases the rate of cis-trans isomerization at prolines on the histone H3 N-terminal tail. Proline isomerization influences H3 methylation thereby regulating gene expression. The polypeptide is FK506-binding protein 4 (FPR4) (Mycosarcoma maydis (Corn smut fungus)).